The sequence spans 205 residues: Ephrin-A1 (205 aa).

The signal sequence occupies residues 1-17; it reads MEFLWAPLLGLCCSLAA. The 144-residue stretch at 18–161 folds into the Ephrin RBD domain; that stretch reads ADRHIVFWNS…THNPQAHVNP (144 aa). N-linked (GlcNAc...) asparagine glycosylation occurs at Asn-26. Cystine bridges form between Cys-51–Cys-92 and Cys-80–Cys-140. Ser-182 carries GPI-anchor amidated serine lipidation. Positions 183-205 are cleaved as a propeptide — removed in mature form; the sequence is AAPRLFPLVWAVLLLPLLLLQSQ.

This sequence belongs to the ephrin family. As to quaternary structure, monomer. Homodimer. Forms heterodimers with EPHA2. Binds to the receptor tyrosine kinases EPHA2, EPHA3, EPHA4, EPHA5, EPHA6 and EPHA7. Also binds with low affinity to EPHA1. Post-translationally, undergoes proteolysis by a metalloprotease to give rise to a soluble monomeric form. N-Glycosylation is required for binding to EPHA2 receptor and inducing its internalization. In terms of tissue distribution, expressed in myogenic progenitor cells.

It localises to the cell membrane. It is found in the secreted. Cell surface GPI-bound ligand for Eph receptors, a family of receptor tyrosine kinases which are crucial for migration, repulsion and adhesion during neuronal, vascular and epithelial development. Binds promiscuously Eph receptors residing on adjacent cells, leading to contact-dependent bidirectional signaling into neighboring cells. Plays an important role in angiogenesis and tumor neovascularization. The recruitment of VAV2, VAV3 and PI3-kinase p85 subunit by phosphorylated EPHA2 is critical for EFNA1-induced RAC1 GTPase activation and vascular endothelial cell migration and assembly. Exerts anti-oncogenic effects in tumor cells through activation and down-regulation of EPHA2. Activates EPHA2 by inducing tyrosine phosphorylation which leads to its internalization and degradation. Acts as a negative regulator in the tumorigenesis of gliomas by down-regulating EPHA2 and FAK. Can evoke collapse of embryonic neuronal growth cone and regulates dendritic spine morphogenesis. This is Ephrin-A1 (Efna1) from Mus musculus (Mouse).